The chain runs to 575 residues: Epsin-1 (575 aa).

A 1,2-diacyl-sn-glycero-3-phospho-(1D-myo-inositol-4,5-bisphosphate) is bound by residues R8, K11, R25, N30, R63, and H73. The ENTH domain maps to 12-144; it reads NIVHNYSEAE…RDEDRLREER (133 aa). A disordered region spans residues 149-186; the sequence is KTKEKLAQTATASSAAVGSGPPPEAEQAWPQSSGEEEL. Positions 157-167 are enriched in low complexity; it reads TATASSAAVGS. 3 consecutive UIM domains span residues 183–202, 208–227, and 233–252; these read EEEL…ADQP, EDDV…HDKE, and GDDL…TGGK. Disordered regions lie at residues 264–283 and 293–575; these read FTTP…ASVP and SDPW…PFLL. 8 consecutive repeat copies span residues 274–276, 294–296, 306–308, 319–321, 332–334, 349–351, 367–369, and 377–379. Residues 274–379 form an 8 X 3 AA repeats of D-P-W region; it reads DPWGGPASVP…APAPAFSDPW (106 aa). Low complexity predominate over residues 306 to 316; sequence DPWGGAAPTPA. The segment covering 333–346 has biased composition (low complexity); it reads PWGGTPAPAAGEGP. Over residues 367–379 the composition is skewed to low complexity; it reads DPWAPAPAFSDPW. S382 is subject to Phosphoserine. Positions 401–410 match the [DE]-X(1,2)-F-X-X-[FL]-X-X-X-R motif motif; that stretch reads DEFSDFDRLR. S418 and S419 each carry phosphoserine. T420 carries the phosphothreonine modification. Phosphoserine occurs at positions 434, 446, and 453. Residues 453–467 show a composition bias toward pro residues; that stretch reads SPPPAATPTPTPPTR. A phosphothreonine mark is found at T459, T463, and T469. Residue S472 is modified to Phosphoserine. T493 bears the Phosphothreonine mark. 2 repeat units span residues 501-503 and 517-519. Residues 501-573 are 3 X 3 AA repeats of N-P-F; that stretch reads NPFLPSGAPA…GPPAPNTNPF (73 aa). At R533 the chain carries Omega-N-methylarginine. The segment covering 556–569 has biased composition (pro residues); sequence GLPPMMPPGPPAPN. Repeat unit 3 spans residues 571–573; that stretch reads NPF.

Belongs to the epsin family. Monomer. Binds ITSN1. Binds clathrin, ZBTB16/ZNF145, AP2A1 and AP2A2. Binds ubiquitinated proteins. Interacts with RALBP1 in a complex also containing NUMB and TFAP2A during interphase and mitosis. Interacts with AP2B1. Interacts with UBQLN2. Interacts with REPS2; the interaction is direct. Interacts with EPS15; the interaction is direct. Interacts with ENTREP1. Post-translationally, ubiquitinated. Phosphorylated on serine and/or threonine residues in mitotic cells. Phosphorylation reduces interaction with REPS2, AP-2 and the membrane fraction. Depolarization of synaptosomes results in dephosphorylation. As to expression, ubiquitously expressed. Detected in liver, spleen and testis, and weakly in lung and thymus (at protein level).

The protein resides in the cytoplasm. It localises to the cell membrane. It is found in the nucleus. The protein localises to the membrane. Its subcellular location is the clathrin-coated pit. In terms of biological role, binds to membranes enriched in phosphatidylinositol 4,5-bisphosphate (PtdIns(4,5)P2). Modifies membrane curvature and facilitates the formation of clathrin-coated invaginations. Regulates receptor-mediated endocytosis. This is Epsin-1 (Epn1) from Rattus norvegicus (Rat).